The following is a 708-amino-acid chain: MIGWTHVCVSALILRKYGPEVLEEILRKAGYQEDIKFDIQCYYDDTETMRIFRVAATVLGLSVDDMWEMYGEFLITHACETGWQKMLFCMANNLQEFLDNLNSMHYFIDQIAFKSEMKGPTFQCEPFGESGLKLHYFSFRQGLFPIVKGLVRKTARTLFEMDVKVCMLERNQERRKSGMVEHVIFSVEPDDNHRKGKRLFHKFRNTKTTENAPSFTLSSTILVGLRDFKNIFPYHVCFNKQMIIEHIGIYLLREYGLENKKTLKVSDLMQLVQPSDIQLTYKNVLSYLNTLFIFQLKHHSKRNEVQEGSSEAFQQPLVLKGEMMPINDGNSIIFICSPHVTTVRDILNLKLYISDMPMHDATRDLVMLNQSRICQMELNKKLEETMKKMKKMTEELEVKKSQTDRLLFEFVPPVIAEALRAAKTVPAQEFSDCSVIFTDIPDFFTISVNCSPTEIITVVTDLFHRFDRIIEKHKGYKVLSLMDSYLIVGGVPNANQYHCEDSLNLALGLLFEAKQVVVPKLERSVRLRIGVHCGPVVAGIVSQQKPRFCVLGNTVNVTKSICSHSSPGKVLVSNAVRTMVTKHLKSIFVFNANGYLELQSGKVLTHFLEKNEKCSVWDIVDRDKATNDSIDGYRELHSDNGTEEWQEATVAAYRVISVVDALENKQSRTRKALTRLRSVKRKFRTIQSNDSGVSVSEPNVESAVCSIM.

Heme is bound at residue histidine 105. Residues 368–409 (LNQSRICQMELNKKLEETMKKMKKMTEELEVKKSQTDRLLFE) adopt a coiled-coil conformation. The Guanylate cyclase domain occupies 434–562 (SVIFTDIPDF…NTVNVTKSIC (129 aa)). Aspartate 439 and aspartate 483 together coordinate Mg(2+).

This sequence belongs to the adenylyl cyclase class-4/guanylyl cyclase family. In terms of assembly, heterodimer; with other soluble guanylate cyclases. Requires heme as cofactor. Expressed in a small number of neurons, corresponding to URX, AQR and PQR neurons.

The protein resides in the cytoplasm. The catalysed reaction is GTP = 3',5'-cyclic GMP + diphosphate. With respect to regulation, may be regulated by molecular oxygen. Probably not activated by nitric oxide (NO). In terms of biological role, synthesizes cyclic GMP (cGMP) from GTP. May play a role in sensory neurons. The chain is Soluble guanylate cyclase gcy-37 (gcy-37) from Caenorhabditis elegans.